Reading from the N-terminus, the 284-residue chain is NAD kinase (284 aa).

Asp-70 acts as the Proton acceptor in catalysis. NAD(+) contacts are provided by residues 70-71 (DG), 139-140 (NE), Lys-167, Asp-169, Leu-177, 180-185 (TAYNLS), and Gln-236.

The protein belongs to the NAD kinase family. The cofactor is a divalent metal cation.

The protein resides in the cytoplasm. The enzyme catalyses NAD(+) + ATP = ADP + NADP(+) + H(+). Functionally, involved in the regulation of the intracellular balance of NAD and NADP, and is a key enzyme in the biosynthesis of NADP. Catalyzes specifically the phosphorylation on 2'-hydroxyl of the adenosine moiety of NAD to yield NADP. The protein is NAD kinase of Helicobacter pylori (strain Shi470).